The primary structure comprises 462 residues: Probable alcohol acetyltransferase crmB (462 aa).

This sequence belongs to the alcohol acetyltransferase FCK4 family.

The protein operates within secondary metabolite biosynthesis. Probable alcohol acetyltransferase; part of the crm gene cluster that mediates the biosynthesis of a yet unidentified copper-responsive metabolite. In contrast to crmA, is not involved in the biosynthesis of fumivalines or fumicicolins. This Aspergillus fumigatus (strain ATCC MYA-4609 / CBS 101355 / FGSC A1100 / Af293) (Neosartorya fumigata) protein is Probable alcohol acetyltransferase crmB.